We begin with the raw amino-acid sequence, 357 residues long: MALIPYALARPFLFSLDPETAHELTVRALALTQGTALQLAYGTSRVNDPITLAGLTFPNRVGLAAGLDKNARCIDGLGAMGFGFVEVGTVTPLAQPGNPRPRLFRLPQAQALINRFGFNNEGLASFMANVKNSTFYRQRQNPNLARKPLPLLLGLNIGKNAATPIERATEDYLTCLDGVYPYADYVAVNISSPNTRNLRSLQSDEALDSLLGAIAHRRQALVAQHGKQTPIFVKIAPDLDASQVDVIAASLRRHGMDGVIATNTTLSRDAVKGLAHADETGGLSGAPVLAMSNRVIGQLRAALGPGFPIIGVGGVMSADDAVSKIRAGADLVQIYTGLIYHGPKLVKQAAALIKTSC.

FMN is bound by residues 65 to 69 (AGLDK) and Thr89. Lys69 provides a ligand contact to substrate. 114 to 118 (NRFGF) provides a ligand contact to substrate. Positions 156 and 189 each coordinate FMN. A substrate-binding site is contributed by Asn189. The Nucleophile role is filled by Ser192. Asn194 serves as a coordination point for substrate. Lys234 and Thr262 together coordinate FMN. Substrate is bound at residue 263 to 264 (NT). Residues Gly285, Gly314, and 335–336 (YT) contribute to the FMN site.

Belongs to the dihydroorotate dehydrogenase family. Type 2 subfamily. Monomer. FMN serves as cofactor.

It localises to the cell membrane. It catalyses the reaction (S)-dihydroorotate + a quinone = orotate + a quinol. It participates in pyrimidine metabolism; UMP biosynthesis via de novo pathway; orotate from (S)-dihydroorotate (quinone route): step 1/1. In terms of biological role, catalyzes the conversion of dihydroorotate to orotate with quinone as electron acceptor. The protein is Dihydroorotate dehydrogenase (quinone) of Albidiferax ferrireducens (strain ATCC BAA-621 / DSM 15236 / T118) (Rhodoferax ferrireducens).